We begin with the raw amino-acid sequence, 119 residues long: MEKKKILDAALAPRIISGVPTDGQPLSGGPLSWAWCHTTLKRWALMKTRPYKYPLSTEPPTPPSVPNSASVNHNTTTNTTLSYTRCHSTTYTKPLRERSSRPWTRSATISRLPPRSWTN.

The interval 55 to 119 (LSTEPPTPPS…SRLPPRSWTN (65 aa)) is disordered. Residues 81–92 (LSYTRCHSTTYT) show a composition bias toward polar residues.

This is an uncharacterized protein from Saccharomyces cerevisiae (strain ATCC 204508 / S288c) (Baker's yeast).